The sequence spans 126 residues: Large ribosomal subunit protein uL22 (126 aa).

This sequence belongs to the universal ribosomal protein uL22 family. In terms of assembly, part of the 50S ribosomal subunit.

Functionally, this protein binds specifically to 23S rRNA; its binding is stimulated by other ribosomal proteins, e.g. L4, L17, and L20. It is important during the early stages of 50S assembly. It makes multiple contacts with different domains of the 23S rRNA in the assembled 50S subunit and ribosome. The globular domain of the protein is located near the polypeptide exit tunnel on the outside of the subunit, while an extended beta-hairpin is found that lines the wall of the exit tunnel in the center of the 70S ribosome. The protein is Large ribosomal subunit protein uL22 of Caulobacter vibrioides (strain ATCC 19089 / CIP 103742 / CB 15) (Caulobacter crescentus).